A 279-amino-acid chain; its full sequence is Energy-coupling factor transporter ATP-binding protein EcfA1 (279 aa).

In terms of domain architecture, ABC transporter spans 8–240 (IKFENVSFSY…KQFLRDINLD (233 aa)). ATP is bound at residue 41 to 48 (GHNGSGKS).

It belongs to the ABC transporter superfamily. Energy-coupling factor EcfA family. As to quaternary structure, forms a stable energy-coupling factor (ECF) transporter complex composed of 2 membrane-embedded substrate-binding proteins (S component), 2 ATP-binding proteins (A component) and 2 transmembrane proteins (T component).

The protein resides in the cell membrane. Its function is as follows. ATP-binding (A) component of a common energy-coupling factor (ECF) ABC-transporter complex. Unlike classic ABC transporters this ECF transporter provides the energy necessary to transport a number of different substrates. The protein is Energy-coupling factor transporter ATP-binding protein EcfA1 of Mycoplasmoides gallisepticum (strain R(low / passage 15 / clone 2)) (Mycoplasma gallisepticum).